The sequence spans 353 residues: 4-hydroxy-3-methylbut-2-en-1-yl diphosphate synthase (flavodoxin) (353 aa).

Residues cysteine 268, cysteine 271, cysteine 303, and glutamate 310 each coordinate [4Fe-4S] cluster.

This sequence belongs to the IspG family. The cofactor is [4Fe-4S] cluster.

It carries out the reaction (2E)-4-hydroxy-3-methylbut-2-enyl diphosphate + oxidized [flavodoxin] + H2O + 2 H(+) = 2-C-methyl-D-erythritol 2,4-cyclic diphosphate + reduced [flavodoxin]. The protein operates within isoprenoid biosynthesis; isopentenyl diphosphate biosynthesis via DXP pathway; isopentenyl diphosphate from 1-deoxy-D-xylulose 5-phosphate: step 5/6. In terms of biological role, converts 2C-methyl-D-erythritol 2,4-cyclodiphosphate (ME-2,4cPP) into 1-hydroxy-2-methyl-2-(E)-butenyl 4-diphosphate. This Ruminiclostridium cellulolyticum (strain ATCC 35319 / DSM 5812 / JCM 6584 / H10) (Clostridium cellulolyticum) protein is 4-hydroxy-3-methylbut-2-en-1-yl diphosphate synthase (flavodoxin).